The sequence spans 461 residues: MEFSEWYSEILEKAGIYDLRYPIKGCGVYLPYGFKIRRYSFEILRKLLDDTNHDETLFPMLIPENLLAKEGEHIKGFEDEVYWVTHGGKSPLEIKLALRPTSETTMYYMMKQWIKVHTDLPMKLYQVVNTFRYETKHTRPLIRLREIMSFKEAHTAHSTQDDCNKQIKEAIEIYGKFFDEICIPVIISKRPEWDKFPGADYTMAFDTIFPDGKTMQIGTVHNLGQNFAKTFELEFETPDGNKDYAYQTCYGISDRAIASLIAIHGDEKGLVIPIDVAPIQIVLIPLLFKGKEEIVIEKIKELSKILKTKYRVHVDDRDIRPGRKYNDWEIKGVPLRIEIGPRDIEEGKAVIVRRDNGQKMTVEAFNILNEVEKTFEDYKASLLQKATEKLEKYITVIENDKKDLLLLSEKVKFALSESKGIILVPYIESIYNEEFEGLIDASVLGLTTYNGKEYISIARTY.

Belongs to the class-II aminoacyl-tRNA synthetase family. ProS type 3 subfamily. In terms of assembly, homodimer.

It is found in the cytoplasm. The catalysed reaction is tRNA(Pro) + L-proline + ATP = L-prolyl-tRNA(Pro) + AMP + diphosphate. Functionally, catalyzes the attachment of proline to tRNA(Pro) in a two-step reaction: proline is first activated by ATP to form Pro-AMP and then transferred to the acceptor end of tRNA(Pro). In Methanococcus vannielii (strain ATCC 35089 / DSM 1224 / JCM 13029 / OCM 148 / SB), this protein is Proline--tRNA ligase.